The primary structure comprises 279 residues: Phenylalanine 3-hydroxylase (279 aa).

Residues H140, H145, and E186 each contribute to the Fe cation site.

It belongs to the biopterin-dependent aromatic amino acid hydroxylase family. Fe(2+) is required as a cofactor.

It carries out the reaction (6R)-L-erythro-5,6,7,8-tetrahydrobiopterin + L-phenylalanine + O2 = 3-hydroxy-L-phenylalanine + (4aS,6R)-4a-hydroxy-L-erythro-5,6,7,8-tetrahydrobiopterin. In terms of biological role, in vitro, catalyzes the highly regiospecific C-3 hydroxylation of L-phenylalanine (L-Phe) to yield 3-hydroxy-L-phenylalanine (meta-Tyr), an amino acid found in bacterial secondary metabolites such as sanglifehrin A and some pacidamycins. Tetrahydrobiopterin (BH4) seems to be the physiological pterin, however the hydroxylase is also able to use 6-methyltetrahydropterin (6-MePH4). This Streptomyces coeruleorubidus protein is Phenylalanine 3-hydroxylase.